An 88-amino-acid polypeptide reads, in one-letter code: Translation initiation factor IF-1 1 (88 aa).

The 72-residue stretch at 1–72 (MAKEELIELD…TKGRINFRHK (72 aa)) folds into the S1-like domain.

This sequence belongs to the IF-1 family. As to quaternary structure, component of the 30S ribosomal translation pre-initiation complex which assembles on the 30S ribosome in the order IF-2 and IF-3, IF-1 and N-formylmethionyl-tRNA(fMet); mRNA recruitment can occur at any time during PIC assembly.

It localises to the cytoplasm. In terms of biological role, one of the essential components for the initiation of protein synthesis. Stabilizes the binding of IF-2 and IF-3 on the 30S subunit to which N-formylmethionyl-tRNA(fMet) subsequently binds. Helps modulate mRNA selection, yielding the 30S pre-initiation complex (PIC). Upon addition of the 50S ribosomal subunit IF-1, IF-2 and IF-3 are released leaving the mature 70S translation initiation complex. This Burkholderia mallei (strain ATCC 23344) protein is Translation initiation factor IF-1 1.